The chain runs to 321 residues: Zinc finger protein 524 (321 aa).

Polar residues-rich tracts occupy residues Met-1–Ser-14 and Ala-39–Ser-48. Disordered stretches follow at residues Met-1–Leu-80 and Val-86–Lys-105. A DNA-binding region (a.T hook) is located at residues Ser-49–Arg-59. 4 C2H2-type zinc fingers span residues His-109–His-131, His-137–His-159, Phe-165–His-187, and Tyr-193–His-216. The disordered stretch occupies residues Gly-248–Asp-321. The span at Pro-262–Ser-271 shows a compositional bias: polar residues. Positions Thr-274–Gln-285 are enriched in gly residues.

The protein belongs to the krueppel C2H2-type zinc-finger protein family.

The protein resides in the nucleus. Functionally, may be involved in transcriptional regulation. The polypeptide is Zinc finger protein 524 (Znf524) (Mus musculus (Mouse)).